Consider the following 390-residue polypeptide: Lipoyl synthase, mitochondrial (390 aa).

Residues 1–19 constitute a mitochondrion transit peptide; that stretch reads MPTLLRILRPPRSPFTRCL. The tract at residues 23–48 is disordered; that stretch reads ATPSSSGSSSRSKFTESLETGPGLDD. Residues cysteine 98, cysteine 103, cysteine 109, cysteine 136, cysteine 140, cysteine 143, and serine 350 each contribute to the [4Fe-4S] cluster site. The 221-residue stretch at 119–339 folds into the Radical SAM core domain; it reads AEGRSAATAT…KEVAENLGFL (221 aa).

This sequence belongs to the radical SAM superfamily. Lipoyl synthase family. It depends on [4Fe-4S] cluster as a cofactor.

The protein resides in the mitochondrion. It catalyses the reaction [[Fe-S] cluster scaffold protein carrying a second [4Fe-4S](2+) cluster] + N(6)-octanoyl-L-lysyl-[protein] + 2 oxidized [2Fe-2S]-[ferredoxin] + 2 S-adenosyl-L-methionine + 4 H(+) = [[Fe-S] cluster scaffold protein] + N(6)-[(R)-dihydrolipoyl]-L-lysyl-[protein] + 4 Fe(3+) + 2 hydrogen sulfide + 2 5'-deoxyadenosine + 2 L-methionine + 2 reduced [2Fe-2S]-[ferredoxin]. It functions in the pathway protein modification; protein lipoylation via endogenous pathway; protein N(6)-(lipoyl)lysine from octanoyl-[acyl-carrier-protein]: step 2/2. Its function is as follows. Catalyzes the radical-mediated insertion of two sulfur atoms into the C-6 and C-8 positions of the octanoyl moiety bound to the lipoyl domains of lipoate-dependent enzymes, thereby converting the octanoylated domains into lipoylated derivatives. This is Lipoyl synthase, mitochondrial from Laccaria bicolor (strain S238N-H82 / ATCC MYA-4686) (Bicoloured deceiver).